The sequence spans 452 residues: Serine--tRNA ligase (452 aa).

Position 251 to 253 (251 to 253 (TSE)) interacts with L-serine. 282–284 (RSE) provides a ligand contact to ATP. Residue Glu-305 participates in L-serine binding. 369–372 (EISS) provides a ligand contact to ATP. Residue Ser-404 coordinates L-serine.

Belongs to the class-II aminoacyl-tRNA synthetase family. Type-1 seryl-tRNA synthetase subfamily. As to quaternary structure, homodimer. The tRNA molecule binds across the dimer.

It localises to the cytoplasm. The catalysed reaction is tRNA(Ser) + L-serine + ATP = L-seryl-tRNA(Ser) + AMP + diphosphate + H(+). The enzyme catalyses tRNA(Sec) + L-serine + ATP = L-seryl-tRNA(Sec) + AMP + diphosphate + H(+). It functions in the pathway aminoacyl-tRNA biosynthesis; selenocysteinyl-tRNA(Sec) biosynthesis; L-seryl-tRNA(Sec) from L-serine and tRNA(Sec): step 1/1. Functionally, catalyzes the attachment of serine to tRNA(Ser). Is also able to aminoacylate tRNA(Sec) with serine, to form the misacylated tRNA L-seryl-tRNA(Sec), which will be further converted into selenocysteinyl-tRNA(Sec). This chain is Serine--tRNA ligase, found in Albidiferax ferrireducens (strain ATCC BAA-621 / DSM 15236 / T118) (Rhodoferax ferrireducens).